A 170-amino-acid chain; its full sequence is 3-dehydroquinate dehydratase (170 aa).

Catalysis depends on Tyr22, which acts as the Proton acceptor. Substrate contacts are provided by Asn76, His82, and Asp89. Catalysis depends on His102, which acts as the Proton donor. Substrate-binding positions include 103-104 and Arg113; that span reads LT.

It belongs to the type-II 3-dehydroquinase family. As to quaternary structure, homododecamer.

The enzyme catalyses 3-dehydroquinate = 3-dehydroshikimate + H2O. It participates in metabolic intermediate biosynthesis; chorismate biosynthesis; chorismate from D-erythrose 4-phosphate and phosphoenolpyruvate: step 3/7. Functionally, catalyzes a trans-dehydration via an enolate intermediate. The protein is 3-dehydroquinate dehydratase (aroQ) of Helicobacter pylori (strain J99 / ATCC 700824) (Campylobacter pylori J99).